We begin with the raw amino-acid sequence, 344 residues long: MMASLKAEETSQMQLVEREENDEDEDLFEMIDKLIAQGINAGDVKKLQEAGIHTCNGLMMHTKKNLTGIKGLSEAKVDKICEAAEKIVNFGYMTGSDALIKRKSVVKITTGCQALDDLLGGGIETSAITEAFGEFRSGKTQLAHTLCVTTQLPTNMKGGNGKVAYIDTEGTFRPDRIVPIAERFGMDPGAVLDNIIYARAYTYEHQYNLLLGLAAKMSEEPFRILIVDSIIALFRVDFTGRGELADRQQKLAQMLSRLIKIAEEFNVAVYMTNQVIADPGGGMFISDPKKPAGGHVLAHAATIRLLFRKGKGDTRVCKVYDAPNLAEAEASFQITQGGIADAKD.

The disordered stretch occupies residues 1–22 (MMASLKAEETSQMQLVEREEND). ATP is bound at residue 133-140 (GEFRSGKT). Arg-235 is a binding site for dsDNA. The ssDNA site is built by Arg-235, Phe-238, Arg-241, Arg-247, and Arg-315. Residues Arg-241 and Arg-247 each coordinate dsDNA.

It belongs to the RecA family. DMC1 subfamily. In terms of assembly, double stacked ring-shaped homooctamer. Interacts with BRCA2A and BRCA2B. Expressed in mitotic and/or meiotic tissues. Expressed in roots, leaves and anthers and carpels of young fower buds.

Its subcellular location is the nucleus. Its function is as follows. May participate in meiotic recombination, specifically in homologous strand assimilation, which is required for the resolution of meiotic double-strand breaks. Mediates interhomolog recombination during meiosis. This Arabidopsis thaliana (Mouse-ear cress) protein is Meiotic recombination protein DMC1 homolog.